Here is a 1043-residue protein sequence, read N- to C-terminus: RNA cytidine acetyltransferase (1043 aa).

ATP is bound by residues 285–294 (GRGKSAAVGL) and R462. Residues 551–736 (VLMAPIDKSR…VPVYIRQNSN (186 aa)) enclose the N-acetyltransferase domain. Acetyl-CoA is bound by residues 622-624 (VAV), 629-635 (QSMGYGG), and R723. The tract at residues 1020–1043 (IPDAKDPANKNAKKKKRFSSGGRR) is disordered. The span at 1030–1043 (NAKKKKRFSSGGRR) shows a compositional bias: basic residues.

The protein belongs to the RNA cytidine acetyltransferase family. NAT10 subfamily. In terms of assembly, part of the small subunit (SSU) processome, composed of more than 70 proteins and the RNA chaperone small nucleolar RNA (snoRNA) U3.

Its subcellular location is the nucleus. The protein resides in the nucleolus. The enzyme catalyses a cytidine in 18S rRNA + acetyl-CoA + ATP + H2O = an N(4)-acetylcytidine in 18S rRNA + ADP + phosphate + CoA + H(+). It carries out the reaction a cytidine in tRNA + acetyl-CoA + ATP + H2O = an N(4)-acetylcytidine in tRNA + ADP + phosphate + CoA + H(+). Functionally, RNA cytidine acetyltransferase with specificity toward both 18S rRNA and tRNAs. Catalyzes the formation of N(4)-acetylcytidine (ac4C) in 18S rRNA. Required for early nucleolar cleavages of precursor rRNA at sites A0, A1 and A2 during 18S rRNA synthesis. Catalyzes the formation of ac4C in serine and leucine tRNAs. Requires a tRNA-binding adapter protein for full tRNA acetyltransferase activity but not for 18S rRNA acetylation. Part of the small subunit (SSU) processome, first precursor of the small eukaryotic ribosomal subunit. During the assembly of the SSU processome in the nucleolus, many ribosome biogenesis factors, an RNA chaperone and ribosomal proteins associate with the nascent pre-rRNA and work in concert to generate RNA folding, modifications, rearrangements and cleavage as well as targeted degradation of pre-ribosomal RNA by the RNA exosome. This Caenorhabditis elegans protein is RNA cytidine acetyltransferase.